Consider the following 384-residue polypeptide: Monomeric sarcosine oxidase (384 aa).

Residue 6–36 (DVIVIGLGGMGSAAAHHLSARGARVLGLEKF) participates in FAD binding. S-8alpha-FAD cysteine is present on Cys-315.

It belongs to the MSOX/MTOX family. MSOX subfamily. As to quaternary structure, monomer. FAD serves as cofactor.

It localises to the cytoplasm. The catalysed reaction is sarcosine + O2 + H2O = formaldehyde + glycine + H2O2. In terms of biological role, catalyzes the oxidative demethylation of sarcosine. In Streptomyces avermitilis (strain ATCC 31267 / DSM 46492 / JCM 5070 / NBRC 14893 / NCIMB 12804 / NRRL 8165 / MA-4680), this protein is Monomeric sarcosine oxidase.